The following is a 326-amino-acid chain: Protein phosphatase 1 regulatory subunit SDS22 homolog (326 aa).

The disordered stretch occupies residues 1-22 (MSNDKSAEVVVLPRENDEESKE). 12 LRR repeats span residues 35–57 (DIDS…LTGF), 58–80 (PKIE…ISSL), 81–102 (VTLT…LESL), 103–126 (VNLV…KLTK), 128–146 (ETLY…LEAL), 147–170 (TQLK…HLVN), 172–190 (DELF…VETL), 191–212 (QKLS…VEQL), 213–236 (NNLK…PLTN), 238–256 (LLLD…VERL), 257–280 (ESLN…QLSK), and 281–304 (LKGL…QYRR).

Belongs to the SDS22 family.

The protein localises to the nucleus. Regulatory subunit of protein phosphatase 1. This Caenorhabditis elegans protein is Protein phosphatase 1 regulatory subunit SDS22 homolog (sds-22).